The chain runs to 163 residues: Zinc finger A20 and AN1 domain-containing stress-associated protein 3 (163 aa).

An A20-type zinc finger spans residues 7 to 41; the sequence is LQEPRLCANNCGFFGSTATQNLCSKCFRDLQHQEQ. Cys13, Cys17, Cys29, and Cys32 together coordinate Zn(2+). The interval 57–101 is disordered; sequence VGAAASSSVSPPPPPPADSKEIVEAKSEKRAAAEPEEADGPPQDP. A compositionally biased stretch (basic and acidic residues) spans 74–89; that stretch reads DSKEIVEAKSEKRAAA. Residues 98–144 form an AN1-type zinc finger; that stretch reads PQDPKRCLTCRRRVGITGFRCRCGFVFCGTHRYAEQHECSFDFKRMG. Zn(2+) contacts are provided by Cys104, Cys107, Cys118, Cys120, Cys125, His128, His134, and Cys136.

Functionally, may be involved in environmental stress response. In Arabidopsis thaliana (Mouse-ear cress), this protein is Zinc finger A20 and AN1 domain-containing stress-associated protein 3 (SAP3).